Reading from the N-terminus, the 482-residue chain is Transcription initiation factor IIE subunit alpha (482 aa).

An HTH TFE/IIEalpha-type domain is found at 9–99; the sequence is VKNLLKFVVR…KYPHAIDAIK (91 aa). Residues 124–152 form a C4-type zinc finger; it reads CPICLTKYTQLEAVQLLNFDRTEFLCSLC. The span at 274 to 286 shows a compositional bias: basic and acidic residues; the sequence is RELQERQAEEKRK. Disordered stretches follow at residues 274–295 and 321–482; these read RELQERQAEEKRKQNAVPEWHK and AMDS…FEDV. Polar residues predominate over residues 321–345; the sequence is AMDSINPDNEPAQETSYQNNRTLTE. Positions 374-401 are enriched in acidic residues; it reads EEEEEEEEEEDEEEEEEEEMEDVMDDND. The segment covering 419–432 has biased composition (polar residues); it reads TAGTAKTESNTSND. The segment covering 433-444 has biased composition (basic and acidic residues); it reads VKQESINDKTED. A compositionally biased stretch (acidic residues) spans 464 to 482; that stretch reads GDDDDDDDDDEMDIEFEDV.

Belongs to the TFIIE alpha subunit family. In terms of assembly, TFIIE is a tetramer of two alpha (TFA1) and two beta (TFA2) subunits.

It localises to the nucleus. Functionally, recruits TFIIH to the initiation complex and stimulates the RNA polymerase II C-terminal domain kinase and DNA-dependent ATPase activities of TFIIH. Both TFIIH and TFIIE are required for promoter clearance by RNA polymerase. The chain is Transcription initiation factor IIE subunit alpha (TFA1) from Saccharomyces cerevisiae (strain ATCC 204508 / S288c) (Baker's yeast).